Reading from the N-terminus, the 91-residue chain is Parbolysin P6 (91 aa).

3 disulfide bridges follow: cysteine 16-cysteine 37, cysteine 22-cysteine 33, and cysteine 47-cysteine 60.

This sequence belongs to the worm cytolysin family. As to expression, localized within the skin and proboscis and are most readily isolated from body mucus secretions.

The protein resides in the secreted. Its function is as follows. Cytolysin that shows hemolytic activity (on bovine erythrocytes, HC(50)=5.75 mg/ml). This hemolytic activity is completely inhibited by small unilamelar vesicles composed of PC/PG, PC/PI and PC/PS in 1:1 molar ratios (with at least 100 mg/ml concentration). In Parborlasia corrugatus (Antarctic nemertean worm), this protein is Parbolysin P6.